Here is a 984-residue protein sequence, read N- to C-terminus: Respiratory nitrate reductase subunit alpha (984 aa).

Positions 1 to 43 (MSRNDASQLDDGETTAESPPDDQANDAPEVGDPPGDPVDADSG) are disordered. A compositionally biased stretch (acidic residues) spans 8–24 (QLDDGETTAESPPDDQA). Residues 103-167 (DSVSRSTHSV…CYTDYVNADQ (65 aa)) enclose the 4Fe-4S Mo/W bis-MGD-type domain. Residues His110, Cys114, Cys118, and Cys153 each contribute to the [4Fe-4S] cluster site. Asp249 contacts Mo-bis(molybdopterin guanine dinucleotide).

Belongs to the prokaryotic molybdopterin-containing oxidoreductase family. Probable multiprotein complex; a catalytic heterodimer of an alpha and beta chain is proposed to associate with additional subunits involved in membrane attachment and electron transfer. [4Fe-4S] cluster is required as a cofactor. It depends on Mo-bis(molybdopterin guanine dinucleotide) as a cofactor. Exported by the Tat system.

The protein localises to the cell membrane. It carries out the reaction nitrate + a quinol = a quinone + nitrite + H2O. Inhibited by cyanide, azide and antimycin A. Enzyme stability is not dependent on salt concentration. Its function is as follows. The respiratory membrane-bound nitrate reductase enzyme complex plays a role in generation of metabolic energy by using nitrate as a terminal electron acceptor during anaerobic conditions. The alpha chain is the actual site of nitrate reduction. The protein is Respiratory nitrate reductase subunit alpha (narG) of Haloferax mediterranei (strain ATCC 33500 / DSM 1411 / JCM 8866 / NBRC 14739 / NCIMB 2177 / R-4) (Halobacterium mediterranei).